The following is a 246-amino-acid chain: tRNA (guanine-N(1)-)-methyltransferase (246 aa).

S-adenosyl-L-methionine contacts are provided by residues Gly113 and 133–138 (IGDYVL).

It belongs to the RNA methyltransferase TrmD family. Homodimer.

It is found in the cytoplasm. It carries out the reaction guanosine(37) in tRNA + S-adenosyl-L-methionine = N(1)-methylguanosine(37) in tRNA + S-adenosyl-L-homocysteine + H(+). Functionally, specifically methylates guanosine-37 in various tRNAs. This is tRNA (guanine-N(1)-)-methyltransferase from Haemophilus influenzae (strain PittEE).